A 232-amino-acid chain; its full sequence is U2 small nuclear ribonucleoprotein B'' (232 aa).

The 80-residue stretch at 10–89 (QTVYLRNLNE…KRMRVQYAKT (80 aa)) folds into the RRM 1 domain. The segment at 92–159 (DCLATEDGST…QEPPAPPNNI (68 aa)) is disordered. Residues 108-123 (KKQEEKAAEKKRRAEE) show a composition bias toward basic and acidic residues. Residues 127 to 151 (SGPNAAAQSNGTGYQASRLGKTSQE) are compositionally biased toward polar residues. Residues 158-232 (NILFIQNLPA…NPMAISYAKK (75 aa)) enclose the RRM 2 domain.

The protein belongs to the RRM U1 A/B'' family. Component of the spliceosome where it is associated with snRNP U2.

The protein localises to the nucleus. It localises to the cajal body. The protein resides in the nucleoplasm. It is found in the cytoplasm. Its function is as follows. Involved in nuclear pre-mRNA splicing. This Oryza sativa subsp. indica (Rice) protein is U2 small nuclear ribonucleoprotein B''.